A 394-amino-acid polypeptide reads, in one-letter code: Phosphoglycerate kinase (394 aa).

Substrate contacts are provided by residues Asp21–Asn23, Arg37, His60–Arg63, Arg119, and Arg152. ATP contacts are provided by residues Lys202, Glu324, and Gly350–Ser353.

The protein belongs to the phosphoglycerate kinase family. Monomer.

The protein resides in the cytoplasm. The catalysed reaction is (2R)-3-phosphoglycerate + ATP = (2R)-3-phospho-glyceroyl phosphate + ADP. Its pathway is carbohydrate degradation; glycolysis; pyruvate from D-glyceraldehyde 3-phosphate: step 2/5. The sequence is that of Phosphoglycerate kinase from Herpetosiphon aurantiacus (strain ATCC 23779 / DSM 785 / 114-95).